A 533-amino-acid chain; its full sequence is Probable dolichyl pyrophosphate Man9GlcNAc2 alpha-1,3-glucosyltransferase (533 aa).

A disordered region spans residues 1 to 20 (MPKKKPAKHSGEDDITIPVS). The next 9 membrane-spanning stretches (helical) occupy residues 42 to 64 (FLCI…YSGA), 149 to 169 (WTVL…FVLV), 184 to 204 (WHIA…GHFQ), 214 to 234 (VGAI…LFSL), 264 to 284 (ILSV…FWWP), 360 to 380 (GFLY…FQVH), 422 to 442 (LLIP…SPGN), 463 to 483 (VFLL…YLTI), and 491 to 511 (FLFE…FAFY).

Belongs to the ALG6/ALG8 glucosyltransferase family.

The protein resides in the endoplasmic reticulum membrane. It catalyses the reaction an alpha-D-Man-(1-&gt;2)-alpha-D-Man-(1-&gt;2)-alpha-D-Man-(1-&gt;3)-[alpha-D-Man-(1-&gt;2)-alpha-D-Man-(1-&gt;3)-[alpha-D-Man-(1-&gt;2)-alpha-D-Man-(1-&gt;6)]-alpha-D-Man-(1-&gt;6)]-beta-D-Man-(1-&gt;4)-beta-D-GlcNAc-(1-&gt;4)-alpha-D-GlcNAc-diphospho-di-trans,poly-cis-dolichol + a di-trans,poly-cis-dolichyl beta-D-glucosyl phosphate = an alpha-D-Glc-(1-&gt;3)-alpha-D-Man-(1-&gt;2)-alpha-D-Man-(1-&gt;2)-alpha-D-Man-(1-&gt;3)-[alpha-D-Man-(1-&gt;2)-alpha-D-Man-(1-&gt;3)-[alpha-D-Man-(1-&gt;2)-alpha-D-Man-(1-&gt;6)]-alpha-D-Man-(1-&gt;6)]-beta-D-Man-(1-&gt;4)-beta-D-GlcNAc-(1-&gt;4)-alpha-D-GlcNAc-diphospho-di-trans,poly-cis-dolichol + a di-trans,poly-cis-dolichyl phosphate + H(+). The protein operates within protein modification; protein glycosylation. Its function is as follows. Adds the first glucose residue to the lipid-linked oligosaccharide precursor for N-linked glycosylation. Transfers glucose from dolichyl phosphate glucose (Dol-P-Glc) onto the lipid-linked oligosaccharide Man(9)GlcNAc(2)-PP-Dol. This chain is Probable dolichyl pyrophosphate Man9GlcNAc2 alpha-1,3-glucosyltransferase, found in Arabidopsis thaliana (Mouse-ear cress).